Reading from the N-terminus, the 203-residue chain is ATP-dependent Clp protease proteolytic subunit (203 aa).

S107 (nucleophile) is an active-site residue. The active site involves H132.

The protein belongs to the peptidase S14 family. In terms of assembly, fourteen ClpP subunits assemble into 2 heptameric rings which stack back to back to give a disk-like structure with a central cavity, resembling the structure of eukaryotic proteasomes.

It localises to the cytoplasm. It carries out the reaction Hydrolysis of proteins to small peptides in the presence of ATP and magnesium. alpha-casein is the usual test substrate. In the absence of ATP, only oligopeptides shorter than five residues are hydrolyzed (such as succinyl-Leu-Tyr-|-NHMec, and Leu-Tyr-Leu-|-Tyr-Trp, in which cleavage of the -Tyr-|-Leu- and -Tyr-|-Trp bonds also occurs).. In terms of biological role, cleaves peptides in various proteins in a process that requires ATP hydrolysis. Has a chymotrypsin-like activity. Plays a major role in the degradation of misfolded proteins. The protein is ATP-dependent Clp protease proteolytic subunit of Shewanella denitrificans (strain OS217 / ATCC BAA-1090 / DSM 15013).